We begin with the raw amino-acid sequence, 252 residues long: Uridylate kinase (252 aa).

Residue 20-23 (KLSG) participates in ATP binding. The tract at residues 28-33 (GGGGLG) is involved in allosteric activation by GTP. Residue glycine 62 participates in UMP binding. The ATP site is built by glycine 63 and arginine 67. UMP is bound by residues aspartate 82 and 143 to 150 (MGMPYFST). Asparagine 171, tyrosine 177, and aspartate 180 together coordinate ATP.

Belongs to the UMP kinase family. Homohexamer.

It localises to the cytoplasm. It catalyses the reaction UMP + ATP = UDP + ADP. It functions in the pathway pyrimidine metabolism; CTP biosynthesis via de novo pathway; UDP from UMP (UMPK route): step 1/1. Its activity is regulated as follows. Allosterically activated by GTP. Inhibited by UTP. In terms of biological role, catalyzes the reversible phosphorylation of UMP to UDP. The protein is Uridylate kinase of Streptomyces avermitilis (strain ATCC 31267 / DSM 46492 / JCM 5070 / NBRC 14893 / NCIMB 12804 / NRRL 8165 / MA-4680).